The sequence spans 314 residues: 2-desacetyl-2-hydroxyethyl bacteriochlorophyllide A dehydrogenase (314 aa).

The protein operates within porphyrin-containing compound metabolism; bacteriochlorophyll biosynthesis (light-independent). Functionally, this protein catalyzes the penultimate step in bacteriochlorophyll a biosynthesis. The protein is 2-desacetyl-2-hydroxyethyl bacteriochlorophyllide A dehydrogenase (bchC) of Rhodobacter capsulatus (strain ATCC BAA-309 / NBRC 16581 / SB1003).